Consider the following 630-residue polypeptide: Golgi apyrase (630 aa).

Topologically, residues 1–500 are lumenal; it reads MLIENTNDRF…RKQSSSLSNK (500 aa). The active-site Proton acceptor is E152. The helical transmembrane segment at 501–517 threads the bilayer; the sequence is GFLMWFAIICCIFYLIF. Residues 518 to 630 lie on the Cytoplasmic side of the membrane; sequence HRSHIIRRRF…SKFKDSRLYD (113 aa). The segment at 586-606 is disordered; that stretch reads SSATMQREHEPQRTASQSANL.

The protein belongs to the GDA1/CD39 NTPase family. As to quaternary structure, interacts with activator subunit VMA13 of vacuolar H(+)-ATPase. Interacts with CDC55; this interaction is disrupted by adenovirus E4orf4, which remains associated with both YND1 and CDC55. Ca(2+) is required as a cofactor. The cofactor is Mg(2+). Requires Mn(2+) as cofactor.

The protein resides in the golgi apparatus. Its subcellular location is the membrane. The catalysed reaction is a ribonucleoside 5'-triphosphate + 2 H2O = a ribonucleoside 5'-phosphate + 2 phosphate + 2 H(+). The protein operates within protein modification; protein glycosylation. With respect to regulation, activity is inhibited both by interaction with VMA13 and by V-ATPase acidification of the lumen. The activity of VMA13 is not required for YND1 inhibition. Functionally, catalyzes the hydrolysis of phosphoanhydride bonds of nucleoside tri- and di-phosphates. Has equal high activity toward ADP/ATP, GDP/GTP, and UDP/UTP and approximately 50% less toward CDP/CTP and thiamine pyrophosphate. Has no activity toward GMP. Required for Golgi glycosylation and cell wall integrity. Together with CDC55, required for adenovirus E4orf4 (early region 4 open reading frame 4) induced toxicity, the apyrase activity is not required for this function. Plays a role in sphingolipid synthesis. The sequence is that of Golgi apyrase (YND1) from Saccharomyces cerevisiae (strain ATCC 204508 / S288c) (Baker's yeast).